Reading from the N-terminus, the 202-residue chain is Small ribosomal subunit protein uS4c (202 aa).

The S4 RNA-binding domain maps to 90 to 154 (MRLDNIIFRL…SQSIIIKNLN (65 aa)).

It belongs to the universal ribosomal protein uS4 family. As to quaternary structure, part of the 30S ribosomal subunit. Contacts protein S5. The interaction surface between S4 and S5 is involved in control of translational fidelity.

It is found in the plastid. The protein localises to the chloroplast. Functionally, one of the primary rRNA binding proteins, it binds directly to 16S rRNA where it nucleates assembly of the body of the 30S subunit. In terms of biological role, with S5 and S12 plays an important role in translational accuracy. This is Small ribosomal subunit protein uS4c (rps4) from Marchantia polymorpha (Common liverwort).